The chain runs to 322 residues: Aspartate carbamoyltransferase catalytic subunit (322 aa).

2 residues coordinate carbamoyl phosphate: Arg65 and Thr66. Residue Lys93 participates in L-aspartate binding. Positions 115, 143, and 146 each coordinate carbamoyl phosphate. L-aspartate is bound by residues Arg176 and Arg230. The carbamoyl phosphate site is built by Gly271 and Pro272.

Belongs to the aspartate/ornithine carbamoyltransferase superfamily. ATCase family. In terms of assembly, heterododecamer (2C3:3R2) of six catalytic PyrB chains organized as two trimers (C3), and six regulatory PyrI chains organized as three dimers (R2).

It catalyses the reaction carbamoyl phosphate + L-aspartate = N-carbamoyl-L-aspartate + phosphate + H(+). It participates in pyrimidine metabolism; UMP biosynthesis via de novo pathway; (S)-dihydroorotate from bicarbonate: step 2/3. Catalyzes the condensation of carbamoyl phosphate and aspartate to form carbamoyl aspartate and inorganic phosphate, the committed step in the de novo pyrimidine nucleotide biosynthesis pathway. The sequence is that of Aspartate carbamoyltransferase catalytic subunit from Brucella anthropi (strain ATCC 49188 / DSM 6882 / CCUG 24695 / JCM 21032 / LMG 3331 / NBRC 15819 / NCTC 12168 / Alc 37) (Ochrobactrum anthropi).